We begin with the raw amino-acid sequence, 831 residues long: Multiphosphoryl transfer protein 1 (831 aa).

Positions 1–90 (MLTIQFLCPL…EYIQVRFIDS (90 aa)) constitute an HPr domain. The active-site Pros-phosphohistidine intermediate; for HPr activity is histidine 15. Residue histidine 15 is modified to Phosphohistidine; by EI. Residues 119 to 650 (GNVLASGVGV…AVKSQLRQLD (532 aa)) form a PTS EI region. Histidine 298 serves as the catalytic Tele-phosphohistidine intermediate; for PTS EI activity. Histidine 298 bears the Phosphohistidine; by autocatalysis mark. Phosphoenolpyruvate contacts are provided by arginine 405 and arginine 441. Positions 540 and 564 each coordinate Mg(2+). Phosphoenolpyruvate is bound by residues 563 to 564 (ND) and arginine 574. Cysteine 611 (proton donor; for EI activity) is an active-site residue. The PTS EIIA type-2 domain occupies 685–828 (PLLALENIFV…QSILTLLETE (144 aa)). The active-site Tele-phosphohistidine intermediate; for PTS EIIA activity is histidine 747. Histidine 747 is subject to Phosphohistidine; by HPr.

The protein belongs to the PEP-utilizing enzyme family. The cofactor is Mg(2+).

The protein localises to the cytoplasm. It carries out the reaction L-histidyl-[protein] + phosphoenolpyruvate = N(pros)-phospho-L-histidyl-[protein] + pyruvate. The enzyme catalyses D-fructose(out) + N(pros)-phospho-L-histidyl-[protein] = D-fructose 1-phosphate(in) + L-histidyl-[protein]. In terms of biological role, multifunctional protein that includes general (non sugar-specific) and sugar-specific components of the phosphoenolpyruvate-dependent sugar phosphotransferase system (sugar PTS). This major carbohydrate active transport system catalyzes the phosphorylation of incoming sugar substrates concomitantly with their translocation across the cell membrane. The enzyme II FryABC PTS system is involved in fructose transport. This is Multiphosphoryl transfer protein 1 (fryA) from Escherichia coli (strain K12).